A 219-amino-acid chain; its full sequence is Urease accessory protein UreG (219 aa).

The interval 1–20 is disordered; sequence MSALHSIPHRSKKLPPLRVG. 23-30 is a GTP binding site; the sequence is GPVGSGKT.

The protein belongs to the SIMIBI class G3E GTPase family. UreG subfamily. Homodimer. UreD, UreF and UreG form a complex that acts as a GTP-hydrolysis-dependent molecular chaperone, activating the urease apoprotein by helping to assemble the nickel containing metallocenter of UreC. The UreE protein probably delivers the nickel.

The protein localises to the cytoplasm. Functionally, facilitates the functional incorporation of the urease nickel metallocenter. This process requires GTP hydrolysis, probably effectuated by UreG. The protein is Urease accessory protein UreG of Methylibium petroleiphilum (strain ATCC BAA-1232 / LMG 22953 / PM1).